Here is a 203-residue protein sequence, read N- to C-terminus: ATP-dependent Clp protease proteolytic subunit (203 aa).

Catalysis depends on Ser107, which acts as the Nucleophile. Residue His132 is part of the active site.

This sequence belongs to the peptidase S14 family. In terms of assembly, fourteen ClpP subunits assemble into 2 heptameric rings which stack back to back to give a disk-like structure with a central cavity, resembling the structure of eukaryotic proteasomes.

The protein localises to the cytoplasm. The enzyme catalyses Hydrolysis of proteins to small peptides in the presence of ATP and magnesium. alpha-casein is the usual test substrate. In the absence of ATP, only oligopeptides shorter than five residues are hydrolyzed (such as succinyl-Leu-Tyr-|-NHMec, and Leu-Tyr-Leu-|-Tyr-Trp, in which cleavage of the -Tyr-|-Leu- and -Tyr-|-Trp bonds also occurs).. In terms of biological role, cleaves peptides in various proteins in a process that requires ATP hydrolysis. Has a chymotrypsin-like activity. Plays a major role in the degradation of misfolded proteins. In Shewanella piezotolerans (strain WP3 / JCM 13877), this protein is ATP-dependent Clp protease proteolytic subunit.